The sequence spans 593 residues: Methylenetetrahydrofolate reductase (NADH) 1 (593 aa).

The Proton donor/acceptor role is filled by Glu21. NAD(+) contacts are provided by residues 21 to 26 (EYFPPK) and 52 to 53 (TW). FAD-binding positions include 52–53 (TW), His81, 111–113 (RGD), Tyr153, 157–160 (HPDA), Asp175, and Lys182. Asp113 lines the substrate pocket. Substrate-binding residues include Gln193 and Tyr285.

The protein belongs to the methylenetetrahydrofolate reductase family. Homodimer. It depends on FAD as a cofactor.

It carries out the reaction (6S)-5-methyl-5,6,7,8-tetrahydrofolate + NAD(+) = (6R)-5,10-methylene-5,6,7,8-tetrahydrofolate + NADH + H(+). The protein operates within one-carbon metabolism; tetrahydrofolate interconversion. Plant MTHFRs strongly prefer NADH over NADPH. Not inhibited by methionine or S-adenosylmethionine. Functionally, the probable reversibility of the MTHFR reaction in plants suggests that they can metabolize the methyl group of 5,10-methylenetetrahydrofolate to serine, sugars and starch. The polypeptide is Methylenetetrahydrofolate reductase (NADH) 1 (Zea mays (Maize)).